Reading from the N-terminus, the 399-residue chain is Phosphoglycerate kinase (399 aa).

Substrate is bound by residues 22–24 (DFN), Arg38, 61–64 (HLGR), Arg120, and Arg153. Residues Lys206, Gly297, Glu328, and 354–357 (GGDT) each bind ATP.

The protein belongs to the phosphoglycerate kinase family. Monomer.

It is found in the cytoplasm. It carries out the reaction (2R)-3-phosphoglycerate + ATP = (2R)-3-phospho-glyceroyl phosphate + ADP. The protein operates within carbohydrate degradation; glycolysis; pyruvate from D-glyceraldehyde 3-phosphate: step 2/5. This Campylobacter concisus (strain 13826) protein is Phosphoglycerate kinase.